We begin with the raw amino-acid sequence, 481 residues long: Autolysin (481 aa).

In terms of domain architecture, Peptidase C51 spans 7-142 (KNEFIERLKT…LQDDNMLMIS (136 aa)). Positions 198 to 323 (SNPKGIVIHN…NEFTSTSCPH (126 aa)) constitute an N-acetylmuramoyl-L-alanine amidase domain. Residues 398-466 (EESARFTNGN…YLPIRTWNGS (69 aa)) form the SH3b domain.

The protein belongs to the N-acetylmuramoyl-L-alanine amidase 2 family.

Its subcellular location is the secreted. It carries out the reaction Hydrolyzes the link between N-acetylmuramoyl residues and L-amino acid residues in certain cell-wall glycopeptides.. In terms of biological role, autolysins are involved in some important biological processes such as cell separation, cell-wall turnover, competence for genetic transformation, formation of the flagella and sporulation. Autolysin strictly depends on the presence of choline-containing cell walls for activity. The protein is Autolysin (lytA) of Staphylococcus aureus.